The following is a 286-amino-acid chain: Acetyl-coenzyme A carboxylase carboxyl transferase subunit beta (286 aa).

The region spanning 28 to 286 (LMQKCSNCKK…KMHMDGRQLK (259 aa)) is the CoA carboxyltransferase N-terminal domain. Zn(2+) contacts are provided by Cys-32, Cys-35, Cys-51, and Cys-54. The C4-type zinc-finger motif lies at 32–54 (CSNCKKIYYRKEMVKALQVCPNC).

Belongs to the AccD/PCCB family. In terms of assembly, acetyl-CoA carboxylase is a heterohexamer composed of biotin carboxyl carrier protein (AccB), biotin carboxylase (AccC) and two subunits each of ACCase subunit alpha (AccA) and ACCase subunit beta (AccD). Zn(2+) serves as cofactor.

The protein localises to the cytoplasm. The enzyme catalyses N(6)-carboxybiotinyl-L-lysyl-[protein] + acetyl-CoA = N(6)-biotinyl-L-lysyl-[protein] + malonyl-CoA. The protein operates within lipid metabolism; malonyl-CoA biosynthesis; malonyl-CoA from acetyl-CoA: step 1/1. Component of the acetyl coenzyme A carboxylase (ACC) complex. Biotin carboxylase (BC) catalyzes the carboxylation of biotin on its carrier protein (BCCP) and then the CO(2) group is transferred by the transcarboxylase to acetyl-CoA to form malonyl-CoA. This is Acetyl-coenzyme A carboxylase carboxyl transferase subunit beta from Oceanobacillus iheyensis (strain DSM 14371 / CIP 107618 / JCM 11309 / KCTC 3954 / HTE831).